Reading from the N-terminus, the 430-residue chain is Serine hydroxymethyltransferase (430 aa).

(6S)-5,6,7,8-tetrahydrofolate contacts are provided by residues leucine 123 and 127–129 (GHL). Lysine 232 carries the N6-(pyridoxal phosphate)lysine modification. Glutamate 248 serves as a coordination point for (6S)-5,6,7,8-tetrahydrofolate.

This sequence belongs to the SHMT family. Homodimer. Requires pyridoxal 5'-phosphate as cofactor.

It is found in the cytoplasm. It catalyses the reaction (6R)-5,10-methylene-5,6,7,8-tetrahydrofolate + glycine + H2O = (6S)-5,6,7,8-tetrahydrofolate + L-serine. It participates in one-carbon metabolism; tetrahydrofolate interconversion. Its pathway is amino-acid biosynthesis; glycine biosynthesis; glycine from L-serine: step 1/1. In terms of biological role, catalyzes the reversible interconversion of serine and glycine with tetrahydrofolate (THF) serving as the one-carbon carrier. This reaction serves as the major source of one-carbon groups required for the biosynthesis of purines, thymidylate, methionine, and other important biomolecules. Also exhibits THF-independent aldolase activity toward beta-hydroxyamino acids, producing glycine and aldehydes, via a retro-aldol mechanism. The protein is Serine hydroxymethyltransferase of Anaplasma marginale (strain St. Maries).